We begin with the raw amino-acid sequence, 201 residues long: Small ribosomal subunit protein uS4 (201 aa).

The segment at 1–38 is disordered; sequence MARYTGPATRKSRRLGVDLVGGDQSFEKRPYPPGQHGR. The region spanning 91 to 157 is the S4 RNA-binding domain; the sequence is SRLDNVVYRA…DPFVIARETA (67 aa).

This sequence belongs to the universal ribosomal protein uS4 family. Part of the 30S ribosomal subunit. Contacts protein S5. The interaction surface between S4 and S5 is involved in control of translational fidelity.

Functionally, one of the primary rRNA binding proteins, it binds directly to 16S rRNA where it nucleates assembly of the body of the 30S subunit. Its function is as follows. With S5 and S12 plays an important role in translational accuracy. This chain is Small ribosomal subunit protein uS4, found in Mycobacterium sp. (strain JLS).